The following is a 435-amino-acid chain: Uracil permease (435 aa).

The next 12 helical transmembrane spans lie at 17–37, 42–62, 67–87, 91–111, 122–142, 161–181, 191–213, 234–254, 311–331, 336–356, 376–396, and 399–419; these read FSWV…TILV, GMSP…YLLI, IPAY…VKAT, GAAM…ALLI, ILPP…LAST, LKHF…AIFL, LIGI…QPVL, VTLG…SEHI, VFSV…GFIG, LISS…FGII, NLII…IQVS, and GFQV…NLIL.

This sequence belongs to the nucleobase:cation symporter-2 (NCS2) (TC 2.A.40) family.

It is found in the cell membrane. Functionally, transport of uracil in the cell. The protein is Uracil permease (pyrP) of Bacillus subtilis (strain 168).